The following is a 478-amino-acid chain: MIQVLLVTICLAAFPYQGSSIILESGNVNDYEVVYPRKVIALSEGAAQQKYEDTMQYEFKVNGEPVVLHLEKNKGLFAKDYSETHYSPDGTRITTYPSVEDHCYYQGRIHNDADSTASISACNGLKGHFKLQGETYFIEPMKLPDSEAHAVFKYENIEKEDESPKMCGVTETNWESDEPIKKVSQLNLNHEIKRHVDIVVVVDSRFCTKHSNDLEVIRKFVHEVVNAIIESYKYMHFGISLVNLETWCNGDLINVQEDSYETLKAFGKWRESDLIKHVNHSNAQFLMDMKFIKNIIGKAYLDSICDPERSVGIVQNYHGITLNVAAIMAHEMGHNLGVRHDGEYCTCYGSSECIMSSHISDPPSKYFSNCSYYQFWKYIENQNPQCILNKPLRTVSIPVSGNEHLEAGKECDCSSPENPCCDAATCKLRPGAQCGEGLCCEQCKFSRAGKICRIPRGDMPDDRCTGQSADCPRYHSHA.

The first 20 residues, 1–20, serve as a signal peptide directing secretion; sequence MIQVLLVTICLAAFPYQGSS. The propeptide occupies 21–188; it reads IILESGNVND…PIKKVSQLNL (168 aa). In terms of domain architecture, Peptidase M12B spans 194–391; it reads RHVDIVVVVD…QNPQCILNKP (198 aa). A disulfide bridge links Cys-207 with Cys-248. The N-linked (GlcNAc...) (complex) asparagine glycan is linked to Asn-279. 3 disulfides stabilise this stretch: Cys-305/Cys-386, Cys-345/Cys-370, and Cys-347/Cys-353. His-330 serves as a coordination point for Zn(2+). Residue Glu-331 is part of the active site. Zn(2+)-binding residues include His-334 and His-340. Asn-369 carries an N-linked (GlcNAc...) (complex) asparagine glycan. A propeptide spanning residues 392-407 is cleaved from the precursor; that stretch reads LRTVSIPVSGNEHLEA. The 82-residue stretch at 397–478 folds into the Disintegrin domain; the sequence is IPVSGNEHLE…ADCPRYHSHA (82 aa). Disulfide bonds link Cys-411–Cys-426, Cys-413–Cys-421, Cys-420–Cys-443, Cys-434–Cys-440, Cys-439–Cys-464, and Cys-452–Cys-471. The Cell attachment site motif lies at 456–458; sequence RGD. A propeptide spanning residues 476 to 478 is cleaved from the precursor; that stretch reads SHA.

Belongs to the venom metalloproteinase (M12B) family. P-II subfamily. P-IIa sub-subfamily. In terms of assembly, monomeric (disintegrin). The cofactor is Zn(2+). In terms of processing, glycans are composed of 4 GlcNAc, 3 Man, 2 Gal, 2 NeuAC and 1 Fuc residue. Expressed by the venom gland.

The protein resides in the secreted. Its function is as follows. Impairs hemostasis in the envenomed animal. In terms of biological role, inhibits platelet aggregation induced by ADP, thrombin, platelet-activating factor and collagen. Acts by inhibiting fibrinogen interaction with platelet receptors alpha-IIb/beta-3 (ITGA2B/ITGB3). This Calloselasma rhodostoma (Malayan pit viper) protein is Zinc metalloproteinase/disintegrin.